A 69-amino-acid polypeptide reads, in one-letter code: Beta-defensin 114 (69 aa).

A signal peptide spans 1–26 (MRIFYYLHFLCYVTFILPATCTLVNA). 3 cysteine pairs are disulfide-bonded: Cys29-Cys57, Cys36-Cys50, and Cys40-Cys58.

Belongs to the beta-defensin family. In terms of tissue distribution, expressed in epididymis, predominantly in the caput (at protein level).

It is found in the secreted. In terms of biological role, has a salt-sensitive antimicrobial activity against Gram-negative bacteria, including E.coli, Gram-positive, including S.aureus, and fungi, including C.albicans. Binds to and neutralizes bacterial lipopolysaccharides (LPS), abolishing TNF production by macrophages challenged with LPS. Rescues the LPS-induced reduction of sperm motility in vitro and may protect from LPS-induced lethality. This chain is Beta-defensin 114 (DEFB114), found in Homo sapiens (Human).